We begin with the raw amino-acid sequence, 126 residues long: Small ribosomal subunit protein bS16 (126 aa).

The segment at Ala87–Glu126 is disordered. The span at Arg99–Asp113 shows a compositional bias: basic and acidic residues. Residues Ala114 to Glu126 show a composition bias toward low complexity.

It belongs to the bacterial ribosomal protein bS16 family.

The sequence is that of Small ribosomal subunit protein bS16 from Agrobacterium fabrum (strain C58 / ATCC 33970) (Agrobacterium tumefaciens (strain C58)).